A 472-amino-acid polypeptide reads, in one-letter code: UDP-N-acetylmuramate--L-alanine ligase (472 aa).

121–127 contributes to the ATP binding site; the sequence is GTHGKTT.

The protein belongs to the MurCDEF family.

Its subcellular location is the cytoplasm. The catalysed reaction is UDP-N-acetyl-alpha-D-muramate + L-alanine + ATP = UDP-N-acetyl-alpha-D-muramoyl-L-alanine + ADP + phosphate + H(+). The protein operates within cell wall biogenesis; peptidoglycan biosynthesis. In terms of biological role, cell wall formation. This Hahella chejuensis (strain KCTC 2396) protein is UDP-N-acetylmuramate--L-alanine ligase.